The chain runs to 246 residues: TATA-box-binding protein (246 aa).

The disordered stretch occupies residues 1 to 27; the sequence is MSSDKTSQQTFKLAPNNSVAQSNSIDQ. 2 consecutive repeat copies span residues 53-129 and 143-220.

It belongs to the TBP family. As to quaternary structure, belongs to the TFIID complex together with the TBP-associated factors (TAFs). Binds DNA as monomer.

The protein resides in the nucleus. In terms of biological role, general transcription factor that functions at the core of the DNA-binding multiprotein factor TFIID. Binding of TFIID to the TATA box is the initial transcriptional step of the pre-initiation complex (PIC), playing a role in the activation of eukaryotic genes transcribed by RNA polymerase II. This chain is TATA-box-binding protein, found in Tetrahymena thermophila.